A 457-amino-acid chain; its full sequence is MEKKIDFKPDSYLIRSGNNFLGILNDIKRRPEDAANELGVSIEEINSIISGKQKISPSLIEKAVNIWPVNERDFYIVSDDCSSGILIMTSQDSIKSSRIMERAGKPYYEYRDTAMSKTAPFRPEWILELCKVENNDPENPKAQWNNGHFMHQFTYFIGEVNFYYKDPEGKKHVAIMNTGDSMYITPFTPHTFTTRDGASQNGLILALTYGSKLTGDIQQELSSLSLDCGSQYALDFTNHENASLSLLEYYFELSNLTKEKFAKRTNFSMETLADFFTKKKLPTFDELKIIAKALNVNSRDLMPNDLTESKVIVKTHDQCDHWKYPESGNYEFYELASTTALPHSKAFEIDVSSSEDLNLDLKVGLHQYVYNIGDSALTINWNYENKTYQKSLNPGDSAYIKPFVPHNFRGNGKILILRIGGKISGDSQRELSFVGRENTQRAISETMQWFDPKGSNS.

The HTH cro/C1-type 1 domain occupies 23-74 (ILNDIKRRPEDAANELGVSIEEINSIISGKQKISPSLIEKAVNIWPVNERDF). A DNA-binding region (H-T-H motif) is located at residues 32–50 (EDAANELGVSIEEINSIIS). The Fe cation site is built by histidine 148 and histidine 190. An HTH cro/C1-type 2 domain is found at 247–301 (LEYYFELSNLTKEKFAKRTNFSMETLADFFTKKKLPTFDELKIIAKALNVNSRDL). The H-T-H motif DNA-binding region spans 258–277 (KEKFAKRTNFSMETLADFFT).

The protein belongs to the non-heme iron-dependent dioxygenase family. It depends on Fe(2+) as a cofactor.

The catalysed reaction is 2-hydroxyethylphosphonate + O2 = methylphosphonate + hydrogencarbonate + H(+). Its pathway is phosphorus metabolism; phosphonate biosynthesis. In terms of biological role, catalyzes the conversion of 2-hydroxyethylphosphonate into methylphosphonate in the methylphosphonate biosynthesis pathway. The sequence is that of Methylphosphonate synthase (mpnS) from Nitrosopumilus maritimus (strain SCM1).